Reading from the N-terminus, the 89-residue chain is Large ribosomal subunit protein eL34 (89 aa).

The disordered stretch occupies residues 1–22; that stretch reads MPAPRYKSGSSKKVYRKAPGNS.

Belongs to the eukaryotic ribosomal protein eL34 family.

This Methanococcus maripaludis (strain C7 / ATCC BAA-1331) protein is Large ribosomal subunit protein eL34.